Here is a 74-residue protein sequence, read N- to C-terminus: Small ribosomal subunit protein uS8c (74 aa).

This sequence belongs to the universal ribosomal protein uS8 family. As to quaternary structure, part of the 30S ribosomal subunit.

The protein resides in the plastid. It localises to the chloroplast. One of the primary rRNA binding proteins, it binds directly to 16S rRNA central domain where it helps coordinate assembly of the platform of the 30S subunit. This is Small ribosomal subunit protein uS8c (rps8) from Oenothera ammophila (Evening primerose).